A 419-amino-acid polypeptide reads, in one-letter code: UPF0329 protein ECU07_1890/ECU10_0010 (419 aa).

Over residues 136–165 (RQRKREEETERSVKELVGDEEKAKSKEEKA) the composition is skewed to basic and acidic residues. Residues 136–222 (RQRKREEETE…KGGKKKSKGG (87 aa)) form a disordered region. Basic residues predominate over residues 213 to 222 (KGGKKKSKGG).

This sequence belongs to the UPF0329 family.

The sequence is that of UPF0329 protein ECU07_1890/ECU10_0010 from Encephalitozoon cuniculi (strain GB-M1) (Microsporidian parasite).